The primary structure comprises 682 residues: Heat shock 70 kDa protein 9, mitochondrial (682 aa).

Residues 1–46 (MASVALLRSFRRREVQMASVSAFKSVSANGKNSMFGKLGYLARPFC) constitute a mitochondrion transit peptide. The interval 640–682 (SKIGEHMSKGSGSSGSDGSSGEGTSGTEQTPEAEFEEASGSRK) is disordered. Over residues 651 to 663 (GSSGSDGSSGEGT) the composition is skewed to gly residues.

It belongs to the heat shock protein 70 (TC 1.A.33) family. DnaK subfamily. In terms of assembly, interacts with HSCB.

It localises to the mitochondrion. It is found in the cytoplasm. Its subcellular location is the cytosol. Its function is as follows. Chaperone involved in the maturation of iron-sulfur [Fe-S] cluster-containing proteins. Has a low intrinsic ATPase activity which is markedly stimulated by HSCB and ISU1. In cooperation with other chaperones, Hsp70s are key components that facilitate folding of de novo synthesized proteins, assist translocation of precursor proteins into organelles, and are responsible for degradation of damaged protein under stress conditions. This is Heat shock 70 kDa protein 9, mitochondrial from Arabidopsis thaliana (Mouse-ear cress).